We begin with the raw amino-acid sequence, 107 residues long: uncharacterized protein (107 aa).

The tract at residues 88–107 (GSTPWGSGRQVNAARPIGGR) is disordered.

The protein resides in the virion. This is an uncharacterized protein from Acanthamoeba polyphaga (Amoeba).